Here is an 855-residue protein sequence, read N- to C-terminus: Pre-mRNA-splicing factor SYF1 (855 aa).

HAT repeat units lie at residues 15 to 47 (LVFEEEDLPYEEEIMRNQFSVKCWLRYIEFKQG), 48 to 80 (APKPRLNQLYERALKLLPCSYKLWYRYLKARRA), 90 to 122 (PAYEDVNNCHERAFVFMHKMPRLWLDYCQFLMD), 124 to 158 (GRVTHTRRTFDRALRALPITQHSRIWPLYLRFLRS), 160 to 192 (PLPETAVRGYRRFLKLSPESAEEYIEYLKSSDR), 198 to 230 (QRLATVVNDERFVSKAGKSNYQLWHELCDLISQ), 235 to 268 (VQSLNVDAIIRGGLTRFTDQLGKLWCSLADYYIR), 270 to 305 (GHFEKARDVYEEAIRTVMTVRDFTQVFDSYAQFEES), and 369 to 407 (GRPREIINTYTEAVQTVDPFKATGKPHTLWVAFAKFYED). Lys420 is subject to N6-acetyllysine. HAT repeat units follow at residues 498-530 (GTFQSTKAVYDRILDLRIATPQIVINYAMFLEE), 532-566 (KYFEESFKAYERGISLFKWPNVSDIWSTYLTKFIA), 571-605 (RKLERARDLFEQALDGCPPKYAKTLYLLYAQLEEE), 643-677 (YGVTHTRGIYQKAIEVLSDEHAREMCLRFADMECK), and 679-713 (GEIDRARAIYSFCSQICDPRTTGAFWQTWKDFEVR). Residues 810–855 (LAQQVNPEEIQLGEDEDEDEMDLEPNEVRLEQQSVPAAVFGSLKED) form a disordered region. Over residues 820–834 (QLGEDEDEDEMDLEP) the composition is skewed to acidic residues. Ser851 carries the post-translational modification Phosphoserine.

This sequence belongs to the crooked-neck family. In terms of assembly, associates with RNA polymerase II, the TCR-specific proteins CKN1/CSA and ERCC6/CSB, and XPA. Identified in the spliceosome C complex. Component of the XAB2 complex, a multimeric protein complex composed of XAB2, PRPF19, AQR, ZNF830, ISY1, and PPIE. Identified in a pentameric intron-binding (IB) complex composed of AQR, XAB2, ISY1, ZNF830 and PPIE that is incorporated into the spliceosome as a preassembled complex. The IB complex does not contain PRPF19.

The protein resides in the nucleus. In terms of biological role, involved in pre-mRNA splicing as component of the spliceosome. Involved in transcription-coupled repair (TCR), transcription and pre-mRNA splicing. This chain is Pre-mRNA-splicing factor SYF1 (XAB2), found in Homo sapiens (Human).